The chain runs to 163 residues: Putative phosphinothricin acetyltransferase YwnH (163 aa).

Positions 1–158 constitute an N-acetyltransferase domain; that stretch reads MTLRLAEHRD…DGKRYDLKIL (158 aa). Acetyl-CoA-binding positions include 85–87, 94–98, and 124–126; these read IYI, KGVGS, and NKP.

The protein belongs to the acetyltransferase family. PAT/BAR subfamily.

The enzyme catalyses phosphinothricin + acetyl-CoA = N-acetylphosphinothricin + CoA + H(+). This enzyme is an effector of phosphinothricin tripeptide (PTT or bialaphos) resistance. Inactivates PTT by transfer of an acetyl group. The chain is Putative phosphinothricin acetyltransferase YwnH (ywnH) from Bacillus subtilis (strain 168).